The primary structure comprises 194 residues: 23 kDa U4/U6.U5 small nuclear ribonucleoprotein component (194 aa).

A C2H2-type zinc finger spans residues 80-104; the sequence is FYCDICNLTFKDTLQYIDHLNHKVH.

In terms of assembly, component of the U4/U6-U5 tri-snRNP complex composed of the U4, U6 and U5 snRNAs and at least PRP3, PRP4, PRP6, PRP8, PRP18, PRP31, PRP38, SNU13, SNU23, SNU66, SNU114, SPP381, SMB1, SMD1, SMD2, SMD3, SMX2, SMX3, LSM2, LSM3, LSM4, LSM5, LSM6, LSM7, LSM8, BRR2 and DIB1.

The protein resides in the nucleus. Participates in pre-mRNA splicing. Part of the U4/U5/U6 tri-snRNP complex, one of the building blocks of the spliceosome. The protein is 23 kDa U4/U6.U5 small nuclear ribonucleoprotein component (SNU23) of Saccharomyces cerevisiae (strain ATCC 204508 / S288c) (Baker's yeast).